Consider the following 150-residue polypeptide: UPF0756 membrane protein ABSDF1616 (150 aa).

The next 4 membrane-spanning stretches (helical) occupy residues 1–21 (MLAQ…CGLL), 45–65 (FFPY…TIGV), 83–103 (FISF…WLGG), and 115–135 (VVAG…GVPV).

This sequence belongs to the UPF0756 family.

The protein resides in the cell membrane. In Acinetobacter baumannii (strain SDF), this protein is UPF0756 membrane protein ABSDF1616.